The chain runs to 277 residues: Glycerol-3-phosphate acyltransferase (277 aa).

5 helical membrane-spanning segments follow: residues 3 to 23, 55 to 75, 79 to 99, 111 to 131, and 155 to 175; these read LFIF…AIIV, IMVM…AKFL, PVTV…PVFF, IGAL…TWLL, and LILV…ILVL. Residues 207–277 are disordered; the sequence is SPATSAEQEF…PKTKTVKEKE (71 aa). Over residues 216-239 the composition is skewed to basic and acidic residues; sequence FPGKEVIDTNIDETEKTEQAEAVK. 2 stretches are compositionally biased toward basic residues: residues 240–253 and 262–271; these read KPKV…AKKT and KPKSTKPKTK.

It belongs to the PlsY family. In terms of assembly, probably interacts with PlsX.

It is found in the cell inner membrane. It catalyses the reaction an acyl phosphate + sn-glycerol 3-phosphate = a 1-acyl-sn-glycero-3-phosphate + phosphate. It functions in the pathway lipid metabolism; phospholipid metabolism. Its function is as follows. Catalyzes the transfer of an acyl group from acyl-phosphate (acyl-PO(4)) to glycerol-3-phosphate (G3P) to form lysophosphatidic acid (LPA). This enzyme utilizes acyl-phosphate as fatty acyl donor, but not acyl-CoA or acyl-ACP. The sequence is that of Glycerol-3-phosphate acyltransferase from Legionella pneumophila subsp. pneumophila (strain Philadelphia 1 / ATCC 33152 / DSM 7513).